The chain runs to 299 residues: Ribosome-inactivating protein saporin-6 (299 aa).

Residues 1-24 (MKIYVVATIAWILLQFSAWTTTDA) form the signal peptide. The active site involves glutamate 200. Positions 278-299 (SSNEANSTVRHYGPLKPTLLIT) are excised as a propeptide. N-linked (GlcNAc...) asparagine glycosylation is present at asparagine 283.

The protein belongs to the ribosome-inactivating protein family. Type 1 RIP subfamily. Seeds and leaves of the plant.

The enzyme catalyses Endohydrolysis of the N-glycosidic bond at one specific adenosine on the 28S rRNA.. Functionally, ribosome-inactivating protein of type 1, inhibits protein synthesis in animal cells. Useful as immunotoxin for pharmacological applications. The chain is Ribosome-inactivating protein saporin-6 (SAP6) from Saponaria officinalis (Common soapwort).